The primary structure comprises 230 residues: Cyclin-U2-2 (230 aa).

The protein belongs to the cyclin family. Cyclin U/P subfamily. In terms of assembly, interacts with CDKA-1. In terms of tissue distribution, expressed in roots and stems. Expressed in the shoot apex, leaf primordia and young leaves.

The protein is Cyclin-U2-2 (CYCU2-2) of Arabidopsis thaliana (Mouse-ear cress).